We begin with the raw amino-acid sequence, 351 residues long: Neutral protease 2 homolog MGG_10927 (351 aa).

Residues 1–16 (MKFSIGVSLLATLAGA) form the signal peptide. Residues 17–177 (VNVDMAKRDT…AAFLAKRTIV (161 aa)) constitute a propeptide that is removed on maturation. Intrachain disulfides connect Cys181/Cys253 and Cys260/Cys278. Residue His303 coordinates Zn(2+). The active site involves Glu304. His307 contributes to the Zn(2+) binding site.

This sequence belongs to the peptidase M35 family. The cofactor is Zn(2+).

The protein localises to the secreted. It catalyses the reaction Preferential cleavage of bonds with hydrophobic residues in P1'. Also 3-Asn-|-Gln-4 and 8-Gly-|-Ser-9 bonds in insulin B chain.. Functionally, secreted metalloproteinase that allows assimilation of proteinaceous substrates. Shows high activities on basic nuclear substrates such as histone and protamine. In Colletotrichum graminicola (strain M1.001 / M2 / FGSC 10212) (Maize anthracnose fungus), this protein is Neutral protease 2 homolog MGG_10927.